The sequence spans 215 residues: Sodium channel regulatory subunit beta-2 (215 aa).

The signal sequence occupies residues 1–29 (MHRDAWLPRPAFSLTGLSLFFSLVPPGRS). The Extracellular segment spans residues 30–157 (MEVTVPATLN…MEEPPERDST (128 aa)). In terms of domain architecture, Ig-like C2-type spans 32-154 (VTVPATLNVL…QVLMEEPPER (123 aa)). N-linked (GlcNAc...) asparagine glycans are attached at residues N42, N66, and N74. Cystine bridges form between C50–C127 and C72–C75. Residues 158-179 (VAVIVGASVGGFLAVVILVLMV) traverse the membrane as a helical segment. Over 180-215 (VKCVRRKKEQKLSTDDLKTEEEGKTDGEGNPDDGAK) the chain is Cytoplasmic. Residues 187 to 215 (KEQKLSTDDLKTEEEGKTDGEGNPDDGAK) are disordered. Residues 189–215 (QKLSTDDLKTEEEGKTDGEGNPDDGAK) are compositionally biased toward basic and acidic residues. At S192 the chain carries Phosphoserine. T204 is subject to Phosphothreonine.

The protein belongs to the sodium channel auxiliary subunit SCN2B (TC 8.A.17) family. In terms of assembly, a voltage-gated sodium (Nav) channel consists of an ion-conducting pore-forming alpha subunit functional on its own that is regulated by one or more beta subunits. The beta subunit SCN2B is disulfide-linked to the pore-forming alpha subunit. Interacts with SCN1A; regulatory subunit of SCN1A/Nav1.1. Interacts with SCN2A; regulatory subunit of SCN2A/Nav1.2. Interacts with SCN3A; regulatory subunit of SCN3A/Nav1.3. Interacts with SCN5A; regulatory subunit of SCN5A/Nav1.5. Interacts with SCN8A; regulatory subunit of SCN8A/Nav1.6. Interacts with SCN9A; regulatory subunit of SCN9A/Nav1.7. Interacts with SCN10A; regulatory subunit of SCN10A/Nav1.8. Interacts with TNR; may play a crucial role in clustering and regulation of activity of SCN2B-containing Nav channels at nodes of Ranvier.

It is found in the cell membrane. The protein localises to the cell projection. Its subcellular location is the axon. Functionally, regulatory subunit of multiple voltage-gated sodium (Nav) channels directly mediating the depolarization of excitable membranes. Navs, also called VGSCs (voltage-gated sodium channels) or VDSCs (voltage-dependent sodium channels), operate by switching between closed and open conformations depending on the voltage difference across the membrane. In the open conformation they allow Na(+) ions to selectively pass through the pore, along their electrochemical gradient. The influx of Na+ ions provokes membrane depolarization, initiating the propagation of electrical signals throughout cells and tissues. The accessory beta subunits participate in localization and functional modulation of the Nav channels. Modulates the activity of SCN1A/Nav1.1, SCN2A/Nav1.2, SCN2A/Nav1.3, SCN5A/Nav1.5, SCN8A/Nav1.6, SCN9A/Nav1.7 and SCN10A/Nav1.8. The chain is Sodium channel regulatory subunit beta-2 from Homo sapiens (Human).